Consider the following 1073-residue polypeptide: 3-hydroxy-3-methylglutaryl-coenzyme A reductase 1 (1073 aa).

8 helical membrane passes run 23–43, 181–201, 211–231, 298–318, 326–346, 399–419, 459–479, and 498–518; these read FMVVPALLASIAYLSIIDDYI, FDILLIFVAYLGMWYALIKVF, FWLAFSTLTSSTFAFLLALLV, HLVVIGGLLSCAIYAHHLTGL, SLILSFDLILVYTFFSAILGL, IAYFKVIMSLGFFAFHAFWLG, GTVVTILPTIFFMPSGFMVQL, and IISKFLVFGFALSIVTNVYFL. The 165-residue stretch at 182-346 folds into the SSD domain; it reads DILLIFVAYL…YTFFSAILGL (165 aa). Low complexity predominate over residues 542-565; it reads SSVTATTTTTATGTTSSGAATSKT. The disordered stretch occupies residues 542 to 589; it reads SSVTATTTTTATGTTSSGAATSKTIGNNKGLKSVQEIPDNEDESSDEE. The span at 579–589 shows a compositional bias: acidic residues; that stretch reads PDNEDESSDEE. Glu-714 acts as the Charge relay system in catalysis. CoA is bound at residue 720–726; sequence STMRGCK. Residues 781-783 and 808-816 contribute to the NADP(+) site; these read SRF and DAMGMNMIS. The Charge relay system role is filled by Lys-848. Residue 877 to 879 coordinates CoA; the sequence is VLK. The Charge relay system role is filled by Asp-924. A helical transmembrane segment spans residues 997-1017; it reads IVASAVLAAELSLCSALAAGH. Residue 1021-1022 participates in CoA binding; that stretch reads SH. The active-site Proton donor is His-1022. The tract at residues 1025–1056 is disordered; it reads HNRSKAPAAGATTTTTPAITDSKASNGSIASN. An NADP(+)-binding site is contributed by 1026–1027; sequence NR. The span at 1030-1042 shows a compositional bias: low complexity; that stretch reads APAAGATTTTTPA. A compositionally biased stretch (polar residues) spans 1046–1055; that stretch reads SKASNGSIAS.

This sequence belongs to the HMG-CoA reductase family.

It is found in the endoplasmic reticulum membrane. It carries out the reaction (R)-mevalonate + 2 NADP(+) + CoA = (3S)-3-hydroxy-3-methylglutaryl-CoA + 2 NADPH + 2 H(+). The protein operates within metabolic intermediate biosynthesis; (R)-mevalonate biosynthesis; (R)-mevalonate from acetyl-CoA: step 3/3. HMG-CoA reductase; part of the first module of ergosterol biosynthesis pathway that includes the early steps of the pathway, conserved across all eukaryotes, and which results in the formation of mevalonate from acetyl-coenzyme A (acetyl-CoA). HMG1 catalyzes the reduction of hydroxymethylglutaryl-CoA (HMG-CoA) to mevalonate. The first module starts with the action of the cytosolic acetyl-CoA acetyltransferase ERG10 that catalyzes the formation of acetoacetyl-CoA. The hydroxymethylglutaryl-CoA synthase ERG13 then condenses acetyl-CoA with acetoacetyl-CoA to form HMG-CoA. The 3-hydroxy-3-methylglutaryl-coenzyme A (HMG-CoA) reductase HMG1 finally reduces HMG-CoA to produce mevalonate. This chain is 3-hydroxy-3-methylglutaryl-coenzyme A reductase 1, found in Candida albicans (strain SC5314 / ATCC MYA-2876) (Yeast).